We begin with the raw amino-acid sequence, 135 residues long: Small ribosomal subunit protein bS16m/bS16c (135 aa).

The transit peptide at 1 to 7 (MVVRIRL) directs the protein to the chloroplast and mitochondrion. Residues 87–135 (PMVAMGRKGGARDTRPVDPMTGRYVDAENKTVNANDNQPKEEDTEAKSA) are disordered. The span at 124–135 (QPKEEDTEAKSA) shows a compositional bias: basic and acidic residues.

This sequence belongs to the bacterial ribosomal protein bS16 family. Component of the mitochondrial ribosome small subunit. Expressed at low levels in flowers, and, to a lower extent, in leaves, stems and roots.

The protein resides in the mitochondrion. It is found in the plastid. Its subcellular location is the chloroplast. The protein is Small ribosomal subunit protein bS16m/bS16c of Arabidopsis thaliana (Mouse-ear cress).